The sequence spans 180 residues: Large ribosomal subunit protein uL6 (180 aa).

The protein belongs to the universal ribosomal protein uL6 family. In terms of assembly, part of the 50S ribosomal subunit.

In terms of biological role, this protein binds to the 23S rRNA, and is important in its secondary structure. It is located near the subunit interface in the base of the L7/L12 stalk, and near the tRNA binding site of the peptidyltransferase center. This Anaeromyxobacter sp. (strain Fw109-5) protein is Large ribosomal subunit protein uL6.